The chain runs to 335 residues: Probable tRNA N6-adenosine threonylcarbamoyltransferase (335 aa).

Positions 109, 113, and 130 each coordinate a divalent metal cation. Residues Tyr130–Gly134, Asp162, Gly177, Glu181, and Asn266 contribute to the substrate site. Asp294 provides a ligand contact to a divalent metal cation.

The protein belongs to the KAE1 / TsaD family. As to quaternary structure, component of the EKC/KEOPS complex; the whole complex dimerizes. Requires a divalent metal cation as cofactor.

The protein localises to the cytoplasm. Its subcellular location is the nucleus. It carries out the reaction L-threonylcarbamoyladenylate + adenosine(37) in tRNA = N(6)-L-threonylcarbamoyladenosine(37) in tRNA + AMP + H(+). Component of the EKC/KEOPS complex that is required for the formation of a threonylcarbamoyl group on adenosine at position 37 (t(6)A37) in tRNAs that read codons beginning with adenine. The complex is probably involved in the transfer of the threonylcarbamoyl moiety of threonylcarbamoyl-AMP (TC-AMP) to the N6 group of A37. Osgep likely plays a direct catalytic role in this reaction, but requires other protein(s) of the complex to fulfill this activity. This is Probable tRNA N6-adenosine threonylcarbamoyltransferase from Nematostella vectensis (Starlet sea anemone).